A 121-amino-acid chain; its full sequence is MARIAGVDIPRDKRVVISLTYIYGVGRSTAQEILAKANVSENTRVRDLTEEELGRIRSAVEEFKVEGDLRREVSLNIKRLIEIGAYRGIRHRRGLPVRGQNTKNNSRTRKGPRRTVANKKK.

Positions 94–121 (GLPVRGQNTKNNSRTRKGPRRTVANKKK) are disordered. The segment covering 106–121 (SRTRKGPRRTVANKKK) has biased composition (basic residues).

The protein belongs to the universal ribosomal protein uS13 family. In terms of assembly, part of the 30S ribosomal subunit. Forms a loose heterodimer with protein S19. Forms two bridges to the 50S subunit in the 70S ribosome.

Located at the top of the head of the 30S subunit, it contacts several helices of the 16S rRNA. In the 70S ribosome it contacts the 23S rRNA (bridge B1a) and protein L5 of the 50S subunit (bridge B1b), connecting the 2 subunits; these bridges are implicated in subunit movement. Contacts the tRNAs in the A and P-sites. The chain is Small ribosomal subunit protein uS13 from Halalkalibacterium halodurans (strain ATCC BAA-125 / DSM 18197 / FERM 7344 / JCM 9153 / C-125) (Bacillus halodurans).